Consider the following 176-residue polypeptide: Cytochrome b (176 aa).

The next 3 helical transmembrane spans lie at 33–53 (FGSL…FLAM), 77–98 (WLLR…YLHV), and 113–133 (WNVG…GYVL). His83 and His97 together coordinate heme b.

This sequence belongs to the cytochrome b family. As to quaternary structure, the cytochrome bc1 complex contains 11 subunits: 3 respiratory subunits (MT-CYB, CYC1 and UQCRFS1), 2 core proteins (UQCRC1 and UQCRC2) and 6 low-molecular weight proteins (UQCRH/QCR6, UQCRB/QCR7, UQCRQ/QCR8, UQCR10/QCR9, UQCR11/QCR10 and a cleavage product of UQCRFS1). This cytochrome bc1 complex then forms a dimer. It depends on heme b as a cofactor.

Its subcellular location is the mitochondrion inner membrane. Its function is as follows. Component of the ubiquinol-cytochrome c reductase complex (complex III or cytochrome b-c1 complex) that is part of the mitochondrial respiratory chain. The b-c1 complex mediates electron transfer from ubiquinol to cytochrome c. Contributes to the generation of a proton gradient across the mitochondrial membrane that is then used for ATP synthesis. The protein is Cytochrome b (MT-CYB) of Mormopterus kalinowskii (Kalinowski's mastiff bat).